A 466-amino-acid chain; its full sequence is Transcription factor SOX-10 (466 aa).

5 disordered regions span residues 1-67 (MAEE…DDDK), 160-200 (LRMQ…QGGA), 213-275 (DHRH…DFGN), 344-375 (TVSP…QPST), and 433-466 (RPLY…LSRP). Residues 23–32 (LSPGSAPSLG) show a composition bias toward low complexity. At S24 the chain carries Phosphoserine. Residues 62–102 (EADDDKFPVCIREAVSQVLSGYDWTLVPMPVRVNGASKSKP) are dimerization (DIM). A DNA-binding region (HMG box) is located at residues 104 to 172 (VKRPMNAFMV…QHKKDHPDYK (69 aa)). Residues 160 to 173 (LRMQHKKDHPDYKY) show a composition bias toward basic and acidic residues. The span at 183-200 (AAQGEAECPGGEAEQGGA) shows a compositional bias: low complexity. The transactivation domain (TAM) stretch occupies residues 228–310 (PEHPSGQSHG…LPPNGHPGHV (83 aa)). The segment covering 254-271 (ADPKRDGRSLGEGGKPHI) has biased composition (basic and acidic residues). The tract at residues 353–466 (KAQVKTETTG…QPVYTTLSRP (114 aa)) is transactivation domain (TAC). Positions 440-466 (SDPSPSGPQSHSPTHWEQPVYTTLSRP) are enriched in polar residues.

Monomer. Interacts with Armcx3 at the mitochondrial outer membrane surface. Interacts with PAX3. Expressed in oligodendroglia of the spinal tube (at protein level).

Its subcellular location is the cytoplasm. It is found in the nucleus. The protein localises to the mitochondrion outer membrane. Transcription factor that plays a central role in developing and mature glia. Specifically activates expression of myelin genes, during oligodendrocyte (OL) maturation, such as DUSP15 and MYRF, thereby playing a central role in oligodendrocyte maturation and CNS myelination. Once induced, MYRF cooperates with SOX10 to implement the myelination program. Transcriptional activator of MITF, acting synergistically with PAX3. Transcriptional activator of MBP, via binding to the gene promoter. The polypeptide is Transcription factor SOX-10 (Sox10) (Mus musculus (Mouse)).